The sequence spans 575 residues: Suppressor of tumorigenicity 7 protein-like (575 aa).

2 helical membrane passes run 36 to 56 (GLAGTGASLWFVAGLGLLYAL) and 80 to 100 (FYVALTGTSSLISGLIFIFEW). The tract at residues 125 to 147 (GTESSISEPGSPSRNRENETSRQ) is disordered. Residues 126–137 (TESSISEPGSPS) are compositionally biased toward polar residues.

The protein belongs to the ST7 family.

The protein localises to the membrane. This is Suppressor of tumorigenicity 7 protein-like (ST7L) from Homo sapiens (Human).